Reading from the N-terminus, the 89-residue chain is Small ribosomal subunit protein uS15 (89 aa).

This sequence belongs to the universal ribosomal protein uS15 family. As to quaternary structure, part of the 30S ribosomal subunit. Forms a bridge to the 50S subunit in the 70S ribosome, contacting the 23S rRNA.

Functionally, one of the primary rRNA binding proteins, it binds directly to 16S rRNA where it helps nucleate assembly of the platform of the 30S subunit by binding and bridging several RNA helices of the 16S rRNA. In terms of biological role, forms an intersubunit bridge (bridge B4) with the 23S rRNA of the 50S subunit in the ribosome. This chain is Small ribosomal subunit protein uS15, found in Staphylococcus carnosus (strain TM300).